A 495-amino-acid polypeptide reads, in one-letter code: Cytochrome P450 monooxygenase aneF (495 aa).

Residues 1–21 (MIAGLVLVVLLTKYLQRVFLH) traverse the membrane as a helical segment. Asn-47 carries an N-linked (GlcNAc...) asparagine glycan. Cys-437 contacts heme.

Belongs to the cytochrome P450 family. It depends on heme as a cofactor.

It is found in the membrane. It catalyses the reaction dauca-4,7-diene + 3 reduced [NADPH--hemoprotein reductase] + 3 O2 = asperaculane D + 3 oxidized [NADPH--hemoprotein reductase] + 4 H2O + 4 H(+). It participates in secondary metabolite biosynthesis. In terms of biological role, cytochrome P450 monooxygenase; part of the gene cluster that mediates the biosynthesis of aculenes, a unique type of norsesquiterpenes that contain a nordaucane skeleton linked to an L-proline moiety and are of mixed biosynthetic origin. The pathway begins with the synthesis of dauca-4,7-diene by the terpene cyclase aneC using farnesyl pyrophosphate (FPP) as substrate. The cytochrome P450 monooxygenase aneF then performs the initial oxidation at C-12 of dauca-4,7-diene to yield asperaculane D. Asperaculane D is substrate of the cytochrome P450 monooxygenase aneD for C-10 hydroxylation to yield asperaculane E. The cytochrome P450 monooxygenase aneG then converts asperaculane E into aculene D via C-2 oxidation. The monomodular nonribosomal peptide synthtase aneB adenylates L-proline and the thiohydrolase aneE transfers this activated L-proline derivative to aculenes D and C to produce respectively aculenes B and A. The dioxygenase aneA converts aculene D into aculene C, and aculene B into aculene A by introducing the 5,6-alkene moiety. Asperculanes A, B, C and F, as well as 14-prolyl asperculane C, might be shunt products of the pathway. This chain is Cytochrome P450 monooxygenase aneF, found in Aspergillus aculeatus (strain ATCC 16872 / CBS 172.66 / WB 5094).